Reading from the N-terminus, the 392-residue chain is Probable protein phosphatase 2C 22 (392 aa).

Residues Met1–Ser26 are disordered. A PPM-type phosphatase domain is found at Arg89–Leu356. Positions 133, 134, 304, and 347 each coordinate Mn(2+).

It belongs to the PP2C family. Mg(2+) is required as a cofactor. The cofactor is Mn(2+).

The enzyme catalyses O-phospho-L-seryl-[protein] + H2O = L-seryl-[protein] + phosphate. It catalyses the reaction O-phospho-L-threonyl-[protein] + H2O = L-threonyl-[protein] + phosphate. This chain is Probable protein phosphatase 2C 22, found in Arabidopsis thaliana (Mouse-ear cress).